The following is a 344-amino-acid chain: Anthranilate phosphoribosyltransferase 2 (344 aa).

5-phospho-alpha-D-ribose 1-diphosphate is bound by residues G81, 84-85 (GD), T89, 91-94 (NIST), 109-117 (KHGNRALSS), and A121. G81 is an anthranilate binding site. S93 is a Mg(2+) binding site. Anthranilate is bound at residue N112. Anthranilate is bound at residue R167. Mg(2+)-binding residues include D226 and E227.

The protein belongs to the anthranilate phosphoribosyltransferase family. Homodimer. The cofactor is Mg(2+).

It catalyses the reaction N-(5-phospho-beta-D-ribosyl)anthranilate + diphosphate = 5-phospho-alpha-D-ribose 1-diphosphate + anthranilate. It participates in amino-acid biosynthesis; L-tryptophan biosynthesis; L-tryptophan from chorismate: step 2/5. Functionally, catalyzes the transfer of the phosphoribosyl group of 5-phosphorylribose-1-pyrophosphate (PRPP) to anthranilate to yield N-(5'-phosphoribosyl)-anthranilate (PRA). The protein is Anthranilate phosphoribosyltransferase 2 of Ralstonia nicotianae (strain ATCC BAA-1114 / GMI1000) (Ralstonia solanacearum).